Consider the following 238-residue polypeptide: Keratin-associated protein 5-3 (238 aa).

A run of 11 repeats spans residues 35–38 (CCVP), 41–44 (CCKP), 47–50 (CCVP), 91–94 (CCVP), 150–153 (CCKP), 160–163 (CCKP), 170–173 (CCKP), 189–192 (CCKP), 199–202 (CCKP), 218–221 (CCKP), and 228–231 (CCVP). Residues 35 to 231 (CCVPVCCCKP…CSSQSSCCVP (197 aa)) form an 11 X 4 AA repeats of C-C-X-P region.

The protein belongs to the KRTAP type 5 family. In terms of assembly, interacts with hair keratins. As to expression, restricted to hair root, not detected in any other tissues.

Functionally, in the hair cortex, hair keratin intermediate filaments are embedded in an interfilamentous matrix, consisting of hair keratin-associated protein (KRTAP), which are essential for the formation of a rigid and resistant hair shaft through their extensive disulfide bond cross-linking with abundant cysteine residues of hair keratins. The matrix proteins include the high-sulfur and high-glycine-tyrosine keratins. This Homo sapiens (Human) protein is Keratin-associated protein 5-3 (KRTAP5-3).